Reading from the N-terminus, the 873-residue chain is Nitrate reductase [NADPH] (873 aa).

A disordered region spans residues 30–61 (TELDTADIPLPPPSKEPTEVLSLDKTTPDSHV). A Mo-molybdopterin-binding site is contributed by Cys-150. One can recognise a Cytochrome b5 heme-binding domain in the interval 512–587 (TRIIDLEEFK…MPDYHIGTLD (76 aa)). His-547 and His-570 together coordinate heme. Positions 616-729 (KAWTKATLTK…KGPTGRFEYL (114 aa)) constitute an FAD-binding FR-type domain. Residues 672–675 (RSYT), 689–693 (LIKIY), 703–705 (KMT), and Thr-756 contribute to the FAD site. NADP(+) is bound at residue 843 to 852 (MVLVCGPEAM).

The protein belongs to the nitrate reductase family. Homodimer. Requires FAD as cofactor. The cofactor is heme. Mo-molybdopterin serves as cofactor.

The enzyme catalyses nitrite + NADP(+) + H2O = nitrate + NADPH + H(+). In terms of biological role, nitrate reductase is a key enzyme involved in the first step of nitrate assimilation in plants, fungi and bacteria. The sequence is that of Nitrate reductase [NADPH] (niaD) from Emericella nidulans (strain FGSC A4 / ATCC 38163 / CBS 112.46 / NRRL 194 / M139) (Aspergillus nidulans).